The following is a 323-amino-acid chain: Acetyl-coenzyme A carboxylase carboxyl transferase subunit alpha (323 aa).

Residues 39–293 enclose the CoA carboxyltransferase C-terminal domain; that stretch reads RLAGKSQQLT…KRSLAESLRQ (255 aa).

This sequence belongs to the AccA family. Acetyl-CoA carboxylase is a heterohexamer composed of biotin carboxyl carrier protein (AccB), biotin carboxylase (AccC) and two subunits each of ACCase subunit alpha (AccA) and ACCase subunit beta (AccD).

The protein resides in the cytoplasm. It carries out the reaction N(6)-carboxybiotinyl-L-lysyl-[protein] + acetyl-CoA = N(6)-biotinyl-L-lysyl-[protein] + malonyl-CoA. Its pathway is lipid metabolism; malonyl-CoA biosynthesis; malonyl-CoA from acetyl-CoA: step 1/1. Component of the acetyl coenzyme A carboxylase (ACC) complex. First, biotin carboxylase catalyzes the carboxylation of biotin on its carrier protein (BCCP) and then the CO(2) group is transferred by the carboxyltransferase to acetyl-CoA to form malonyl-CoA. This Cupriavidus pinatubonensis (strain JMP 134 / LMG 1197) (Cupriavidus necator (strain JMP 134)) protein is Acetyl-coenzyme A carboxylase carboxyl transferase subunit alpha.